The sequence spans 961 residues: SH3 domain-binding protein 4 (961 aa).

Positions 55–114 constitute an SH3 1 domain; the sequence is GNAKEVIAIKDYCPNNFTTLKFSKGDHLYVLDTSGGEWWYAHNTTEMGYIPSSYVQPLNY. 5 positions are modified to phosphoserine: serine 131, serine 244, serine 249, serine 277, and serine 294. The ZU5 domain maps to 315 to 452; the sequence is TNIVCKLDSS…LEPCMYLAIV (138 aa). Serine 635 is subject to Phosphoserine. In terms of domain architecture, SH3 2 spans 652 to 722; sequence SSLKFGKLLK…HTKNVLVVGK (71 aa).

In terms of assembly, homodimer or homooligomer. Interacts with DNM2, EPS15, clathrin, the adapter protein complex 2/AP-2 and TFRC. Interacts with the Rag GTPases RRAGA, RRAGB, RRAGC and RRAGD; the interaction is most probably direct, preferentially occurs with their inactive GDP-bound form and is negatively regulated by amino acids. Post-translationally, phosphorylated upon EGF stimulation. Phosphorylation prevents interaction with DNM2.

The protein resides in the membrane. The protein localises to the clathrin-coated pit. Its subcellular location is the cytoplasmic vesicle. It is found in the clathrin-coated vesicle. It localises to the nucleus. May function in transferrin receptor internalization at the plasma membrane through a cargo-specific control of clathrin-mediated endocytosis. Alternatively, may act as a negative regulator of the amino acid-induced TOR signaling by inhibiting the formation of active Rag GTPase complexes. Preferentially binds inactive Rag GTPase complexes and prevents their interaction with the mTORC1 complex inhibiting its relocalization to lysosomes and its activation. Thereby, may indirectly regulate cell growth, proliferation and autophagy. In Rattus norvegicus (Rat), this protein is SH3 domain-binding protein 4 (Sh3bp4).